The sequence spans 202 residues: Large ribosomal subunit protein uL18 (202 aa).

The protein belongs to the universal ribosomal protein uL18 family. In terms of assembly, part of the 50S ribosomal subunit. Contacts the 5S and 23S rRNAs.

This is one of the proteins that bind and probably mediate the attachment of the 5S RNA into the large ribosomal subunit, where it forms part of the central protuberance. The sequence is that of Large ribosomal subunit protein uL18 from Staphylothermus marinus (strain ATCC 43588 / DSM 3639 / JCM 9404 / F1).